The following is a 340-amino-acid chain: MYTLARQLLFKLSPETSHDLSLDLIGAGGRLGLNGMLCKQPASLPVSVMGLNFANPVGLAAGLDKNGAAIDGFAQLGFGFVEIGTVTPRPQPGNPKPRLFRLPEATAIINRMGFNNLGVDHLLGRVRASRYKGVLGINIGKNFDTPVERAVDDYLICLDKVYTAASYITVNVSSPNTPGLRSLQFGDSLKQLLDALAERREQLAGAHGKRVPLAIKIAPDMSDEETALVAAALMESGMDAVIATNTTLGREGVEALPYGGEAGGLSGAPVLEKSTHIVKVLAGELGGKLPIIAAGGITEGRHAAEKIAAGASLVQIYSGFIYKGPALIREAVDAIAAMPR.

FMN is bound by residues 61-65 (AGLDK) and Thr-85. Lys-65 lines the substrate pocket. Residue 110 to 114 (NRMGF) participates in substrate binding. The FMN site is built by Asn-138 and Asn-171. Asn-171 provides a ligand contact to substrate. Ser-174 functions as the Nucleophile in the catalytic mechanism. A substrate-binding site is contributed by Asn-176. Residues Lys-216 and Thr-244 each contribute to the FMN site. 245 to 246 (NT) is a substrate binding site. FMN is bound by residues Gly-267, Gly-296, and 317-318 (YS).

Belongs to the dihydroorotate dehydrogenase family. Type 2 subfamily. As to quaternary structure, monomer. FMN is required as a cofactor.

The protein localises to the cell membrane. The catalysed reaction is (S)-dihydroorotate + a quinone = orotate + a quinol. The protein operates within pyrimidine metabolism; UMP biosynthesis via de novo pathway; orotate from (S)-dihydroorotate (quinone route): step 1/1. Its function is as follows. Catalyzes the conversion of dihydroorotate to orotate with quinone as electron acceptor. This chain is Dihydroorotate dehydrogenase (quinone), found in Pseudomonas putida (strain ATCC 47054 / DSM 6125 / CFBP 8728 / NCIMB 11950 / KT2440).